The primary structure comprises 143 residues: Peptide methionine sulfoxide reductase MsrB (143 aa).

Positions 5 to 127 (NEELKKKLTP…NSAALRFIPK (123 aa)) constitute a MsrB domain. Cys-116 (nucleophile) is an active-site residue.

Belongs to the MsrB Met sulfoxide reductase family.

It carries out the reaction L-methionyl-[protein] + [thioredoxin]-disulfide + H2O = L-methionyl-(R)-S-oxide-[protein] + [thioredoxin]-dithiol. This is Peptide methionine sulfoxide reductase MsrB from Halalkalibacterium halodurans (strain ATCC BAA-125 / DSM 18197 / FERM 7344 / JCM 9153 / C-125) (Bacillus halodurans).